Consider the following 86-residue polypeptide: Large ribosomal subunit protein bL27 (86 aa).

The tract at residues 1 to 24 is disordered; that stretch reads MAHKKGTGSTRNGRDSNSKRLGVK.

The protein belongs to the bacterial ribosomal protein bL27 family.

The chain is Large ribosomal subunit protein bL27 from Prochlorococcus marinus (strain MIT 9301).